The sequence spans 652 residues: Sodium-dependent nutrient amino acid transporter 1 (652 aa).

The tract at residues 1–54 (MELKGVHQQNGTSNGTGAVGAEGESAPPTAPATAEAAASLETTTEKVDAEQQKP) is disordered. At 1–58 (MELKGVHQQNGTSNGTGAVGAEGESAPPTAPATAEAAASLETTTEKVDAEQQKPERTN) the chain is on the cytoplasmic side. The segment covering 7 to 16 (HQQNGTSNGT) has biased composition (polar residues). Residues 21–42 (AEGESAPPTAPATAEAAASLET) show a composition bias toward low complexity. The span at 43–54 (TTEKVDAEQQKP) shows a compositional bias: basic and acidic residues. The next 4 membrane-spanning stretches (helical) occupy residues 59–79 (WGNG…LGNV), 92–112 (GAFL…MYYL), 130–150 (VVPG…CIIT), and 155–175 (LLAL…PWSY). Residues Asn-201 and Asn-204 are each glycosylated (N-linked (GlcNAc...) asparagine). Transmembrane regions (helical) follow at residues 240–260 (PDWK…LVIM), 269–289 (AAYF…VRAV), 318–338 (AVVQ…MFAS), 352–372 (IVTT…FAIL), 412–432 (LFSV…IVAL), 458–478 (ICGF…ILTL), 485–505 (TYVV…IYGM), 527–547 (CWSF…MVTI), and 564–584 (AGWL…MWYI).

It belongs to the sodium:neurotransmitter symporter (SNF) (TC 2.A.22) family.

It is found in the membrane. Functionally, unusual broad substrate spectrum amino acid:sodium cotransporter that promotes absorption of the D isomers of essential amino acids. Neutral amino acids are the preferred substrates, especially methionine and phenylalanine. The protein is Sodium-dependent nutrient amino acid transporter 1 of Drosophila persimilis (Fruit fly).